We begin with the raw amino-acid sequence, 402 residues long: Hyaluronan and proteoglycan link protein 4 (402 aa).

A signal peptide spans 1–29; it reads MVCARAALGPGALWAAAWGVLLLTAPAGA. Positions 46-161 constitute an Ig-like C2-type domain; the sequence is SVVVQTAPGQ…DAGMVKLDLE (116 aa). 5 disulfides stabilise this stretch: cysteine 68–cysteine 143, cysteine 185–cysteine 266, cysteine 209–cysteine 230, cysteine 293–cysteine 363, and cysteine 318–cysteine 339. A glycan (N-linked (GlcNAc...) asparagine) is linked at asparagine 132. Link domains follow at residues 163–268 and 273–365; these read VVFP…FCFT and GRVF…YCYR.

The protein belongs to the HAPLN family. In terms of tissue distribution, expressed predominantly in brain.

Its subcellular location is the secreted. The protein resides in the extracellular space. The protein localises to the extracellular matrix. In terms of biological role, essential for the proper localization of brevican (BCAN), mainly as a perineuronal nets (PNNs)-type deposition in the brainstem and cerebellum thereby playing a key role in the formation and structural organization of PNNs. Contributes to the formation and transmission of inhibitory GABAergic synapses between Purkinje cells and deep cerebellar nuclei neurons. This chain is Hyaluronan and proteoglycan link protein 4 (HAPLN4), found in Homo sapiens (Human).